Reading from the N-terminus, the 157-residue chain is RxLR effector protein PITG_04049 (157 aa).

An N-terminal signal peptide occupies residues 1-23 (MRLIAGVLAGFLVICEVTSTSES). A RxLR-dEER motif is present at residues 51–65 (QFLRTDVVMNRGEER).

Belongs to the RxLR effector family.

It is found in the secreted. The protein resides in the host cytoplasm. The protein localises to the host nucleus. In terms of biological role, effector that might be involved in host plant infection. This Phytophthora infestans (strain T30-4) (Potato late blight agent) protein is RxLR effector protein PITG_04049.